Consider the following 435-residue polypeptide: tRNA(Ile)-lysidine synthase (435 aa).

Position 24 to 29 (24 to 29) interacts with ATP; it reads SGGLDS.

The protein belongs to the tRNA(Ile)-lysidine synthase family.

The protein localises to the cytoplasm. It carries out the reaction cytidine(34) in tRNA(Ile2) + L-lysine + ATP = lysidine(34) in tRNA(Ile2) + AMP + diphosphate + H(+). Ligates lysine onto the cytidine present at position 34 of the AUA codon-specific tRNA(Ile) that contains the anticodon CAU, in an ATP-dependent manner. Cytidine is converted to lysidine, thus changing the amino acid specificity of the tRNA from methionine to isoleucine. In Chromobacterium violaceum (strain ATCC 12472 / DSM 30191 / JCM 1249 / CCUG 213 / NBRC 12614 / NCIMB 9131 / NCTC 9757 / MK), this protein is tRNA(Ile)-lysidine synthase.